A 372-amino-acid polypeptide reads, in one-letter code: D-alanine--D-alanine ligase (372 aa).

Positions 145-349 (KTVLRAGGIP…CPNLLDQLIE (205 aa)) constitute an ATP-grasp domain. 176 to 231 (DRWGTSELFVKAVSLGSSVATLPVKTETEFTKAVKEVFRYDDRLMVEPRIRGREIE) provides a ligand contact to ATP. Residues Asp303, Glu316, and Asn318 each coordinate Mg(2+).

This sequence belongs to the D-alanine--D-alanine ligase family. Mg(2+) is required as a cofactor. Mn(2+) serves as cofactor.

The protein resides in the cytoplasm. The enzyme catalyses 2 D-alanine + ATP = D-alanyl-D-alanine + ADP + phosphate + H(+). The protein operates within cell wall biogenesis; peptidoglycan biosynthesis. In terms of biological role, cell wall formation. This chain is D-alanine--D-alanine ligase, found in Coxiella burnetii (strain RSA 331 / Henzerling II).